We begin with the raw amino-acid sequence, 508 residues long: DDB1- and CUL4-associated factor 10 (508 aa).

The disordered stretch occupies residues 1–75; that stretch reads MSSGHPSDNE…GSASGSGCRG (75 aa). Basic and acidic residues predominate over residues 7-17; the sequence is SDNEEPRADLL. A compositionally biased stretch (acidic residues) spans 18–32; sequence REEEEEEEEEEDSDE. The segment covering 63-75 has biased composition (gly residues); that stretch reads GGTGSASGSGCRG. WD repeat units follow at residues 126–165, 169–207, 211–250, and 256–295; these read QTHGAVFNLEYSPDGSVLTVACEQTEVLLFDPVSSRHIKT, AHEDCVNNIRFLDNRLFATCSDDTTIALWDLRKLNSKVC, GHASWVKNIEYDTHTRLLVTSGFDGNVITWDTNRFTEDGC, and FHTRYLMRMRLTPDCSKMLISTSSGYLLILHDLDLTQSLE. Residues 307-343 form a disordered region; sequence PPLSTEGSSAGSRSGGPRHTIDNKNHPHREGLSPRNS. The span at 325-338 shows a compositional bias: basic and acidic residues; it reads HTIDNKNHPHREGL. WD repeat units follow at residues 356–396, 419–457, and 475–508; these read DRGN…QEGA, VGRGYIKELCFSPDGRLICSPYGYGVRLLAFDENCAELV, and SHSDVVLTSKFSPTHCQFASGCLSGRVALYQPHF.

Belongs to the WD repeat DCAF10 family.

The protein operates within protein modification; protein ubiquitination. Its function is as follows. May function as a substrate receptor for CUL4-DDB1 E3 ubiquitin-protein ligase complex. The chain is DDB1- and CUL4-associated factor 10 (dcaf10) from Danio rerio (Zebrafish).